The chain runs to 127 residues: Small ribosomal subunit protein uS13 (127 aa).

The tract at residues 93-127 (RRSLPVRGQRTHTNARTRKGPRRGTVAGKKKATKT) is disordered.

The protein belongs to the universal ribosomal protein uS13 family. As to quaternary structure, part of the 30S ribosomal subunit. Forms a loose heterodimer with protein S19. Forms two bridges to the 50S subunit in the 70S ribosome.

In terms of biological role, located at the top of the head of the 30S subunit, it contacts several helices of the 16S rRNA. In the 70S ribosome it contacts the 23S rRNA (bridge B1a) and protein L5 of the 50S subunit (bridge B1b), connecting the 2 subunits; these bridges are implicated in subunit movement. Contacts the tRNAs in the A and P-sites. In Acidobacterium capsulatum (strain ATCC 51196 / DSM 11244 / BCRC 80197 / JCM 7670 / NBRC 15755 / NCIMB 13165 / 161), this protein is Small ribosomal subunit protein uS13.